The primary structure comprises 420 residues: Ribulose bisphosphate carboxylase (420 aa).

Lysine 155 (proton acceptor) is an active-site residue. Lysine 157 is a substrate binding site. Mg(2+) contacts are provided by lysine 181, aspartate 183, and glutamate 184. Lysine 181 carries the N6-carboxylysine modification. Histidine 273 serves as the catalytic Proton acceptor. Substrate-binding positions include arginine 274, histidine 306, 343–345 (SGG), and 365–368 (QAGG).

The protein belongs to the RuBisCO large chain family. Type III subfamily. In terms of assembly, homodimer or homodecamer. In contrast to form I RuBisCO, the form III RuBisCO is composed solely of large subunits. The cofactor is Mg(2+).

The enzyme catalyses 2 (2R)-3-phosphoglycerate + 2 H(+) = D-ribulose 1,5-bisphosphate + CO2 + H2O. It catalyses the reaction D-ribulose 1,5-bisphosphate + O2 = 2-phosphoglycolate + (2R)-3-phosphoglycerate + 2 H(+). Its function is as follows. Catalyzes the addition of molecular CO(2) and H(2)O to ribulose 1,5-bisphosphate (RuBP), generating two molecules of 3-phosphoglycerate (3-PGA). Functions in an archaeal AMP degradation pathway, together with AMP phosphorylase and R15P isomerase. The protein is Ribulose bisphosphate carboxylase of Pyrococcus furiosus (strain ATCC 43587 / DSM 3638 / JCM 8422 / Vc1).